A 278-amino-acid polypeptide reads, in one-letter code: Octanoyltransferase LipM (278 aa).

The BPL/LPL catalytic domain maps to 33-248 (KKMPPTIRFY…GFEKGLDVEL (216 aa)). Catalysis depends on Cys150, which acts as the Acyl-thioester intermediate.

The protein belongs to the octanoyltransferase LipM family. Monomer.

It catalyses the reaction octanoyl-[ACP] + L-lysyl-[protein] = N(6)-octanoyl-L-lysyl-[protein] + holo-[ACP] + H(+). It functions in the pathway protein modification; protein lipoylation via endogenous pathway; protein N(6)-(lipoyl)lysine from octanoyl-[acyl-carrier-protein]. Catalyzes the transfer of endogenously produced octanoic acid from octanoyl-acyl-carrier-protein onto the lipoyl domain of GcvH, an intermediate carrier during protein lipoylation. The protein is Octanoyltransferase LipM of Bacillus cereus (strain ATCC 14579 / DSM 31 / CCUG 7414 / JCM 2152 / NBRC 15305 / NCIMB 9373 / NCTC 2599 / NRRL B-3711).